The primary structure comprises 317 residues: Putative 2-hydroxyacid dehydrogenase SAR2389 (317 aa).

Residues 155–156 (EI), 234–236 (ASR), and Asp260 contribute to the NAD(+) site. Arg236 is a catalytic residue. The active site involves Glu265. The active-site Proton donor is the His283. Residue 283–286 (HIGN) participates in NAD(+) binding.

The protein belongs to the D-isomer specific 2-hydroxyacid dehydrogenase family.

This is Putative 2-hydroxyacid dehydrogenase SAR2389 from Staphylococcus aureus (strain MRSA252).